Consider the following 516-residue polypeptide: Probable serine/threonine-protein kinase ECU02_0550 (516 aa).

A Protein kinase domain is found at 4-230; it reads YKLRQVIGEG…ASEALMHRSF (227 aa). ATP-binding positions include 10–18 and Lys32; that span reads IGEGASSTV. Catalysis depends on Asp120, which acts as the Proton acceptor.

This sequence belongs to the protein kinase superfamily. CAMK Ser/Thr protein kinase family.

The catalysed reaction is L-seryl-[protein] + ATP = O-phospho-L-seryl-[protein] + ADP + H(+). It carries out the reaction L-threonyl-[protein] + ATP = O-phospho-L-threonyl-[protein] + ADP + H(+). The sequence is that of Probable serine/threonine-protein kinase ECU02_0550 from Encephalitozoon cuniculi (strain GB-M1) (Microsporidian parasite).